The following is a 346-amino-acid chain: Biotin synthase (346 aa).

Residues 38–256 (QQVQVSTLLS…IAVARIMMPT (219 aa)) form the Radical SAM core domain. Positions 53, 57, and 60 each coordinate [4Fe-4S] cluster. Cys-97, Cys-128, Cys-188, and Arg-260 together coordinate [2Fe-2S] cluster.

This sequence belongs to the radical SAM superfamily. Biotin synthase family. In terms of assembly, homodimer. It depends on [4Fe-4S] cluster as a cofactor. [2Fe-2S] cluster is required as a cofactor.

It carries out the reaction (4R,5S)-dethiobiotin + (sulfur carrier)-SH + 2 reduced [2Fe-2S]-[ferredoxin] + 2 S-adenosyl-L-methionine = (sulfur carrier)-H + biotin + 2 5'-deoxyadenosine + 2 L-methionine + 2 oxidized [2Fe-2S]-[ferredoxin]. It functions in the pathway cofactor biosynthesis; biotin biosynthesis; biotin from 7,8-diaminononanoate: step 2/2. In terms of biological role, catalyzes the conversion of dethiobiotin (DTB) to biotin by the insertion of a sulfur atom into dethiobiotin via a radical-based mechanism. This is Biotin synthase from Salmonella gallinarum (strain 287/91 / NCTC 13346).